The following is a 142-amino-acid chain: Nucleoside diphosphate kinase (142 aa).

ATP is bound by residues Lys-9, Phe-57, Arg-85, Thr-91, Arg-102, and Asn-112. Residues 87-106 are disordered; sequence AMGATDPAKSEKGTVRGDLG. The active-site Pros-phosphohistidine intermediate is His-115.

This sequence belongs to the NDK family. Homotetramer. The cofactor is Mg(2+).

It localises to the cytoplasm. The catalysed reaction is a 2'-deoxyribonucleoside 5'-diphosphate + ATP = a 2'-deoxyribonucleoside 5'-triphosphate + ADP. It carries out the reaction a ribonucleoside 5'-diphosphate + ATP = a ribonucleoside 5'-triphosphate + ADP. In terms of biological role, major role in the synthesis of nucleoside triphosphates other than ATP. The ATP gamma phosphate is transferred to the NDP beta phosphate via a ping-pong mechanism, using a phosphorylated active-site intermediate. In Dehalococcoides mccartyi (strain ATCC BAA-2266 / KCTC 15142 / 195) (Dehalococcoides ethenogenes (strain 195)), this protein is Nucleoside diphosphate kinase.